We begin with the raw amino-acid sequence, 86 residues long: Small ribosomal subunit protein bS20 (86 aa).

Belongs to the bacterial ribosomal protein bS20 family.

Binds directly to 16S ribosomal RNA. In Buchnera aphidicola subsp. Cinara cedri (strain Cc), this protein is Small ribosomal subunit protein bS20.